A 752-amino-acid chain; its full sequence is Neuroendocrine convertase 1 (752 aa).

Positions 1 to 27 (MKQRGWTLQCTAFTLFCVWCALNSVKA) are cleaved as a signal peptide. The propeptide occupies 28–110 (KRQFVNEWAA…QQYEKERRKR (83 aa)). One can recognise a Peptidase S8 domain in the interval 129-450 (QWYLQDTRMT…FGLLNAKALV (322 aa)). Asp167 acts as the Charge relay system in catalysis. Asn173 is a glycosylation site (N-linked (GlcNAc...) asparagine). His208 serves as the catalytic Charge relay system. 2 cysteine pairs are disulfide-bonded: Cys225/Cys374 and Cys317/Cys347. Ser382 functions as the Charge relay system in the catalytic mechanism. An N-linked (GlcNAc...) asparagine glycan is attached at Asn401. Positions 460–597 (NVPEKKECII…KLILHGTSSQ (138 aa)) constitute a P/Homo B domain. A disulfide bridge links Cys467 with Cys494. The tract at residues 631 to 662 (PTQNSLNGNLLVPKNSSSSSVEDRRDEQVQGA) is disordered. Asn645 carries an N-linked (GlcNAc...) asparagine glycan.

The protein belongs to the peptidase S8 family. Furin subfamily. The cofactor is Ca(2+).

It is found in the cytoplasmic vesicle. Its subcellular location is the secretory vesicle. The enzyme catalyses Release of protein hormones, neuropeptides and renin from their precursors, generally by hydrolysis of -Lys-Arg-|- bonds.. Involved in the processing of hormone and other protein precursors at sites comprised of pairs of basic amino acid residues. Substrates include POMC, renin, enkephalin, dynorphin, somatostatin, insulin and AGRP. The sequence is that of Neuroendocrine convertase 1 (Pcsk1) from Rattus norvegicus (Rat).